The chain runs to 261 residues: Chitinase 8 (261 aa).

An N-terminal signal peptide occupies residues 1-29 (MTTTTTRFVQLAACAAASLLAVAASGAAA). Disulfide bonds link cysteine 53–cysteine 115 and cysteine 221–cysteine 253. Glutamate 98 serves as the catalytic Proton donor.

Belongs to the glycosyl hydrolase 19 family. Chitinase class II subfamily. In terms of tissue distribution, expressed in roots, leaves, sheaths and meristems.

It catalyses the reaction Random endo-hydrolysis of N-acetyl-beta-D-glucosaminide (1-&gt;4)-beta-linkages in chitin and chitodextrins.. In Oryza sativa subsp. japonica (Rice), this protein is Chitinase 8 (Cht8).